A 255-amino-acid chain; its full sequence is 3-deoxy-manno-octulosonate cytidylyltransferase (255 aa).

Belongs to the KdsB family.

It localises to the cytoplasm. It catalyses the reaction 3-deoxy-alpha-D-manno-oct-2-ulosonate + CTP = CMP-3-deoxy-beta-D-manno-octulosonate + diphosphate. The protein operates within nucleotide-sugar biosynthesis; CMP-3-deoxy-D-manno-octulosonate biosynthesis; CMP-3-deoxy-D-manno-octulosonate from 3-deoxy-D-manno-octulosonate and CTP: step 1/1. It participates in bacterial outer membrane biogenesis; lipopolysaccharide biosynthesis. Its function is as follows. Activates KDO (a required 8-carbon sugar) for incorporation into bacterial lipopolysaccharide in Gram-negative bacteria. This is 3-deoxy-manno-octulosonate cytidylyltransferase from Xanthobacter autotrophicus (strain ATCC BAA-1158 / Py2).